A 464-amino-acid polypeptide reads, in one-letter code: MPFKTLSRRTFLTASSALAFLHTPFARALPARQSVNINDYNPHDWIASFKQAFSEGQTVVVPAGFVCDNINTGIFIPPGKTLHILGSLRGNGRGRFVLQDGSQVTGGEGGGMHNITLDVRGSDCTIKGLAMSGFGPVMQIYIGGKNKRVMRNLTIDNLTVSHANYAILRQGFHNQIIGANITNCKFSDLQGDAIEWNVAINDSDILISDHVIERINCTNGKINWGIGIGLAGSTYDNNYPEDQAVKNFVVANITGSDCRQLIHVENGKHFVIRNINARNITPDFSKKAGIDNATVAIYGCDNFVIDNIEMINSAGMLIGYGVIKGKYLSIPQNFRVNNIQLDNTHLAYKLRGIQISAGNAVSFVSLTNIEMKRASLELHNKPQHLFMRNINVMQESSVGPALSMNFDMRKDVRGVFMAKKETLLSLANVHAVNERGQSSVDIDRINHHIVNVEKINFRLPERRE.

The protein operates within slime biogenesis; slime polysaccharide biosynthesis. The chain is Colanic acid biosynthesis protein WcaM (wcaM) from Shigella flexneri.